Here is a 182-residue protein sequence, read N- to C-terminus: CDP-diacylglycerol--glycerol-3-phosphate 3-phosphatidyltransferase (182 aa).

Residues 2 to 12 lie on the Cytoplasmic side of the membrane; that stretch reads QFNIPTLLTLF. The helical transmembrane segment at 13 to 37 threads the bilayer; sequence RVILIPFLVVVFYLPFAWAPMVSAL. The Periplasmic segment spans residues 38–60; sequence IFCIAAITDWFDGFLARRWNQST. The helical transmembrane segment at 61 to 81 threads the bilayer; it reads RFGAFLDPVADKVLVAIAMVL. At 82 to 86 the chain is on the cytoplasmic side; sequence VTEHY. The helical transmembrane segment at 87 to 107 threads the bilayer; sequence HSWWVTLPAATMIAREIIISA. Topologically, residues 108 to 145 are periplasmic; it reads LREWMAELGKRSSVAVSWIGKVKTTAQMVALAWLLWRP. The chain crosses the membrane as a helical span at residues 146-168; it reads NIWVEYAGIALFFVAAVLTLWSM. The Cytoplasmic segment spans residues 169–181; the sequence is LQYLSAARGDLLD.

Belongs to the CDP-alcohol phosphatidyltransferase class-I family.

Its subcellular location is the cell inner membrane. It catalyses the reaction a CDP-1,2-diacyl-sn-glycerol + sn-glycerol 3-phosphate = a 1,2-diacyl-sn-glycero-3-phospho-(1'-sn-glycero-3'-phosphate) + CMP + H(+). The protein operates within phospholipid metabolism; phosphatidylglycerol biosynthesis; phosphatidylglycerol from CDP-diacylglycerol: step 1/2. Catalyzes the conversion of cytidine diphosphate diacylglycerol (CDP-DG) and glycerol 3-phosphate into phosphatidylglycerol. Essential for the synthesis of anionic phospholipids, thereby playing a role in balancing the ratio of zwitterionic and anionic phospholipids, which is thought to be important for normal membrane function. The protein is CDP-diacylglycerol--glycerol-3-phosphate 3-phosphatidyltransferase of Salmonella choleraesuis (strain SC-B67).